Here is a 431-residue protein sequence, read N- to C-terminus: Glucose-1-phosphate adenylyltransferase (431 aa).

Lys39 is a beta-D-fructose 1,6-bisphosphate binding site. AMP contacts are provided by Arg40, His46, and Arg52. Tyr114 contributes to the alpha-D-glucose 1-phosphate binding site. Arg130 is a binding site for AMP. Residues Gly179, 194–195 (EK), and Ser212 contribute to the alpha-D-glucose 1-phosphate site. AMP is bound at residue Arg386. 429-431 (QER) lines the beta-D-fructose 1,6-bisphosphate pocket.

It belongs to the bacterial/plant glucose-1-phosphate adenylyltransferase family. Homotetramer.

The catalysed reaction is alpha-D-glucose 1-phosphate + ATP + H(+) = ADP-alpha-D-glucose + diphosphate. Its pathway is glycan biosynthesis; glycogen biosynthesis. Its activity is regulated as follows. Allosterically activated by fructose-1,6-bisphosphate (F16BP) and inhibited by AMP. Its function is as follows. Involved in the biosynthesis of ADP-glucose, a building block required for the elongation reactions to produce glycogen. Catalyzes the reaction between ATP and alpha-D-glucose 1-phosphate (G1P) to produce pyrophosphate and ADP-Glc. This Klebsiella pneumoniae (strain 342) protein is Glucose-1-phosphate adenylyltransferase.